A 203-amino-acid polypeptide reads, in one-letter code: MGVRFSWGTEVRKLDVEGDKVRGVVTNWERLAADAVVVALGSYSPLLLKRHGIKLPVYPVKGYSLTIPITDASRAPESTIMDETYKIAITRLGDRIRVGGMAEISGYTNDLGPARRRTLEHSVMDLFPGGDAKEASYWSGLRPMTPDGTPVIGPTKIAGLFLNTGHGTLGWTMSSGSARVIADLVSGRKPEIDATDLAVSRYA.

This sequence belongs to the DadA oxidoreductase family.

Its function is as follows. Either a functional dehydrogenase or a non-functional fragment. This is an uncharacterized protein from Sinorhizobium fredii (strain NBRC 101917 / NGR234).